We begin with the raw amino-acid sequence, 566 residues long: MDADRLAELQLTRAEMRRIGEALQDRRFRELLTEYVEEISSPENRRRYEEEIRRLEEERGAAVQFIHPTPHHVLKGRGPSGKCFINICSDQLIEKPRSEAATDDRGRSGHSWRIPYSLTPGRAGRDAAGAPCVLFDAVFHPDALLMAENNARFMTLIHRTATGGIQDNFRIRLEHVTRLKMMKYKGEPQPTMIRRPNPGQTEAADRGPQQTTGPQQPTGPQQPTDPQQPTDTQQPTDPQQTTGPQQTTGPQQTTGPHQPTDPQQTTGPQQPTDPQQPTGPHQPTDPQQTTDPPPTAPQYRLKYRSVLDLQDYRCCRDSGSAGRPTAIIIEVEVPRLRSAQEAELRVEERRLLLEAPTAEYRLELPLAYPVEEERAEAQFNHTHRLLTVTLPVLKRRRVEEEERRAEEEESRKGGDEDGELHPDCGPDPPMMELQTEDTHTPAADTHTPAADTHTPAADTHTPAAETGAGLGSGVALLSSSNVISVCGADVHQQLEEPGDPSAHTDPADTHPADTDPADTDPAHTDPADTDPADTDPAHTDPAHTDPEMESRIAGLHLQNTLCFQLD.

3 disordered regions span residues 183–298 (KYKG…TAPQ), 399–467 (EEEE…AETG), and 493–552 (QLEE…ESRI). A compositionally biased stretch (low complexity) spans 208 to 290 (PQQTTGPQQP…HQPTDPQQTT (83 aa)). The segment covering 399–424 (EEEERRAEEEESRKGGDEDGELHPDC) has biased composition (basic and acidic residues). The span at 440–467 (TPAADTHTPAADTHTPAADTHTPAAETG) shows a compositional bias: low complexity. Over residues 535–550 (DPAHTDPAHTDPEMES) the composition is skewed to basic and acidic residues.

This sequence belongs to the PIH1 family. Kintoun subfamily.

The protein localises to the cytoplasm. It is found in the dynein axonemal particle. In terms of biological role, required for cytoplasmic pre-assembly of axonemal dyneins, thereby playing a central role in motility in cilia and flagella. Involved in pre-assembly of dynein arm complexes in the cytoplasm before intraflagellar transport loads them for the ciliary compartment. The chain is Protein kintoun from Danio rerio (Zebrafish).